A 168-amino-acid polypeptide reads, in one-letter code: Disulfide bond formation protein B (168 aa).

Residues 1 to 11 are Cytoplasmic-facing; it reads MSNPMRPVRSI. The helical transmembrane segment at 12 to 28 threads the bilayer; sequence LLAIFTGCAGLIGYALY. The Periplasmic portion of the chain corresponds to 29-46; it reads LQLVENLLPCPLCVVQRM. Cys38 and Cys41 form a disulfide bridge. Residues 47–63 form a helical membrane-spanning segment; it reads AYWLIGLTALAGFFHTP. Residues 64 to 69 are Cytoplasmic-facing; that stretch reads ETTGRR. A helical membrane pass occupies residues 70–87; the sequence is IYAGLMAVFAFTGGLVAL. Over 88 to 143 the chain is Periplasmic; the sequence is RQAWLVRYPEAFECGISPEEAFLNALPLARWWPVMFEANGDCADVTWKFASLTLPD. A disulfide bond links Cys101 and Cys129. The helical transmembrane segment at 144–162 threads the bilayer; the sequence is WSAIFFMILAALSIYVLLV. Over 163–168 the chain is Cytoplasmic; the sequence is RENQRE.

This sequence belongs to the DsbB family.

It localises to the cell inner membrane. In terms of biological role, required for disulfide bond formation in some periplasmic proteins. Acts by oxidizing the DsbA protein. The protein is Disulfide bond formation protein B of Nitrosospira multiformis (strain ATCC 25196 / NCIMB 11849 / C 71).